Consider the following 162-residue polypeptide: 2-C-methyl-D-erythritol 2,4-cyclodiphosphate synthase (162 aa).

A divalent metal cation is bound by residues Asp8 and His10. 4-CDP-2-C-methyl-D-erythritol 2-phosphate contacts are provided by residues 8–10 (DVH) and 34–35 (HS). His42 is a binding site for a divalent metal cation. 4-CDP-2-C-methyl-D-erythritol 2-phosphate contacts are provided by residues 56 to 58 (DIG), 61 to 65 (FPDND), 132 to 135 (TTTE), Phe139, and Lys142.

Belongs to the IspF family. Homotrimer. A divalent metal cation serves as cofactor.

It catalyses the reaction 4-CDP-2-C-methyl-D-erythritol 2-phosphate = 2-C-methyl-D-erythritol 2,4-cyclic diphosphate + CMP. Its pathway is isoprenoid biosynthesis; isopentenyl diphosphate biosynthesis via DXP pathway; isopentenyl diphosphate from 1-deoxy-D-xylulose 5-phosphate: step 4/6. Involved in the biosynthesis of isopentenyl diphosphate (IPP) and dimethylallyl diphosphate (DMAPP), two major building blocks of isoprenoid compounds. Catalyzes the conversion of 4-diphosphocytidyl-2-C-methyl-D-erythritol 2-phosphate (CDP-ME2P) to 2-C-methyl-D-erythritol 2,4-cyclodiphosphate (ME-CPP) with a corresponding release of cytidine 5-monophosphate (CMP). This Pelotomaculum thermopropionicum (strain DSM 13744 / JCM 10971 / SI) protein is 2-C-methyl-D-erythritol 2,4-cyclodiphosphate synthase.